Reading from the N-terminus, the 233-residue chain is Small ribosomal subunit protein uS3 (233 aa).

Residues 39–107 form the KH type-2 domain; the sequence is VREFLKAKLK…PVHVNIEEVR (69 aa). The interval 209–233 is disordered; sequence PGQVSAEPTQPEKKMRKGGRNAAAN.

This sequence belongs to the universal ribosomal protein uS3 family. As to quaternary structure, part of the 30S ribosomal subunit. Forms a tight complex with proteins S10 and S14.

Binds the lower part of the 30S subunit head. Binds mRNA in the 70S ribosome, positioning it for translation. The chain is Small ribosomal subunit protein uS3 from Laribacter hongkongensis (strain HLHK9).